The following is a 260-amino-acid chain: UPF0246 protein BPSL1241 (260 aa).

The protein belongs to the UPF0246 family.

This chain is UPF0246 protein BPSL1241, found in Burkholderia pseudomallei (strain K96243).